A 75-amino-acid polypeptide reads, in one-letter code: ORF2p protein (75 aa).

The tract at residues 13–18 (WIGHPV) is important for viral replication in intestinal cells. Positions 23 to 45 (IVYLFVGFTPLTLETLHTLNYII) form a transmembrane segment. The interval 53–75 (APRSPHSDPARMRIPTQPRKAPL) is disordered.

Its subcellular location is the host cytoplasmic vesicle membrane. Functionally, facilitates virus release from intestinal cells in vitro, possibly through the host autophagic pathway. The protein is ORF2p protein of Human enterovirus 71 (strain USA/BrCr/1970) (EV71).